Reading from the N-terminus, the 121-residue chain is Large ribosomal subunit protein uL14 (121 aa).

Belongs to the universal ribosomal protein uL14 family. Part of the 50S ribosomal subunit. Forms a cluster with proteins L3 and L19. In the 70S ribosome, L14 and L19 interact and together make contacts with the 16S rRNA in bridges B5 and B8.

Functionally, binds to 23S rRNA. Forms part of two intersubunit bridges in the 70S ribosome. This is Large ribosomal subunit protein uL14 from Parabacteroides distasonis (strain ATCC 8503 / DSM 20701 / CIP 104284 / JCM 5825 / NCTC 11152).